The sequence spans 60 residues: UPF0434 protein ETA_21370 (60 aa).

Belongs to the UPF0434 family.

This Erwinia tasmaniensis (strain DSM 17950 / CFBP 7177 / CIP 109463 / NCPPB 4357 / Et1/99) protein is UPF0434 protein ETA_21370.